Consider the following 415-residue polypeptide: Membrane-bound ghrelin O-acyltransferase mboat4 (415 aa).

At 1–6 the chain is on the lumenal side; the sequence is MIDLLW. The chain crosses the membrane as a helical span at residues 7–28; the sequence is ISSDGHPQLFYQFINIPFAFLF. Residues 29–42 lie on the Cytoplasmic side of the membrane; sequence HCLSSQGHLSIINR. The helical transmembrane segment at 43–58 threads the bilayer; the sequence is YVYLAMGGFMLAIATM. Over 59 to 61 the chain is Lumenal; sequence GPY. A helical transmembrane segment spans residues 62–78; that stretch reads SSLLFLSAIKLLLLIHY. At 79 to 84 the chain is on the cytoplasmic side; the sequence is IHPMHL. A helical transmembrane segment spans residues 85-103; it reads HRWILGLQMCWQTCWHLYV. Over 104–122 the chain is Lumenal; that stretch reads QYQIYWLQEAPDSRLLLAI. The chain crosses the membrane as a helical span at residues 123 to 138; the sequence is SALMLMTQRISSLSLD. Residues 139–193 are Cytoplasmic-facing; the sequence is FQEGTISNQSILIPFLTYSLYFPALLGGPLCSFNAFVQSVERQHTSMTSYLGNLT. Residues 194–214 traverse the membrane as a helical segment; that stretch reads SKISQVIVLVWIKQLFSELLK. Topologically, residues 215 to 227 are lumenal; it reads SATFNIDSVCLDV. A helical transmembrane segment spans residues 228-247; sequence LWIWIFSLTLRLNYYAHWKM. The Cytoplasmic segment spans residues 248-312; that stretch reads SECVNNAAGL…RKIVFNRTSR (65 aa). Residues Asn295 and His326 contribute to the active site. Residues 313 to 326 traverse the membrane as a helical segment; it reads SPLFMTFGFSALWH. The Lumenal segment spans residues 327-328; that stretch reads GL. Residues 329-345 form a helical membrane-spanning segment; it reads HPGQILGFLIWAVTVQA. Topologically, residues 346–364 are cytoplasmic; that stretch reads DYKLHRFSHPKLNSLWRKR. Residues 365-385 form a helical membrane-spanning segment; that stretch reads LYVCVNWAFTQLTVACVVVCV. Residues 386–394 are Lumenal-facing; it reads ELQSLASVK. The helical transmembrane segment at 395–415 threads the bilayer; it reads LLWSSCIAVFPLLSALILIIL.

This sequence belongs to the membrane-bound acyltransferase family. Monomer. Not glycosylated.

It localises to the endoplasmic reticulum membrane. It carries out the reaction octanoyl-CoA + L-seryl-[protein] = O-octanoyl-L-seryl-[protein] + CoA. The enzyme catalyses decanoyl-CoA + L-seryl-[protein] = O-decanoyl-L-seryl-[protein] + CoA. It catalyses the reaction L-seryl-[protein] + acetyl-CoA = O-acetyl-L-seryl-[protein] + CoA. The catalysed reaction is L-seryl-[protein] + butanoyl-CoA = O-butanoyl-L-seryl-[protein] + CoA. It carries out the reaction pentanoyl-CoA + L-seryl-[protein] = O-pentanoyl-L-seryl-[protein] + CoA. The enzyme catalyses hexanoyl-CoA + L-seryl-[protein] = O-hexanoyl-L-seryl-[protein] + CoA. It catalyses the reaction heptanoyl-CoA + L-seryl-[protein] = O-heptanoyl-L-seryl-[protein] + CoA. The catalysed reaction is nonanoyl-CoA + L-seryl-[protein] = O-nonanoyl-L-seryl-[protein] + CoA. It carries out the reaction L-seryl-[protein] + dodecanoyl-CoA = O-dodecanoyl-L-seryl-[protein] + CoA. The enzyme catalyses L-seryl-[protein] + tetradecanoyl-CoA = O-tetradecanoyl-L-seryl-[protein] + CoA. It catalyses the reaction a fatty acyl-CoA + L-seryl-[protein] = O-fatty acyl-L-seryl-[protein] + CoA. Catalyzes ghrelin acylation at 'Ser-3' using preferentially octanoyl-CoA, hexanoyl-CoA and decanoyl-CoA as acyl-CoA donors leading to ghrelin activity. In vitro uses also acyl-CoA donors of different lengths from short-chain (C2) to long-chain fatty acids (C16) knowing that acyl-CoA donors from butanoyl-CoA (C4) to dodecanoyl-CoA (C12) are more efficient compared to longer acyl-CoA donors, such as myristoyl-CoA (C14) and palmitoyl-CoA (C16) that are not efficient. In Danio rerio (Zebrafish), this protein is Membrane-bound ghrelin O-acyltransferase mboat4.